Reading from the N-terminus, the 553-residue chain is CTP synthase (553 aa).

Residues 1–270 (MTKFVFVTGG…DRIICEELRI (270 aa)) form an amidoligase domain region. A CTP-binding site is contributed by Ser13. Ser13 contacts UTP. ATP contacts are provided by residues 14–19 (SLGKGI) and Asp71. Positions 71 and 144 each coordinate Mg(2+). CTP contacts are provided by residues 151 to 153 (DIE), 191 to 196 (KTKPTQ), and Lys227. Residues 191-196 (KTKPTQ) and Lys227 contribute to the UTP site. The Glutamine amidotransferase type-1 domain maps to 295-547 (TIGMVGKYVD…VEAALAHQQN (253 aa)). Gly356 lines the L-glutamine pocket. Residue Cys383 is the Nucleophile; for glutamine hydrolysis of the active site. Residues 384–387 (LGMQ), Glu407, and Arg473 each bind L-glutamine. Active-site residues include His520 and Glu522.

Belongs to the CTP synthase family. Homotetramer.

The enzyme catalyses UTP + L-glutamine + ATP + H2O = CTP + L-glutamate + ADP + phosphate + 2 H(+). It catalyses the reaction L-glutamine + H2O = L-glutamate + NH4(+). It carries out the reaction UTP + NH4(+) + ATP = CTP + ADP + phosphate + 2 H(+). It participates in pyrimidine metabolism; CTP biosynthesis via de novo pathway; CTP from UDP: step 2/2. Allosterically activated by GTP, when glutamine is the substrate; GTP has no effect on the reaction when ammonia is the substrate. The allosteric effector GTP functions by stabilizing the protein conformation that binds the tetrahedral intermediate(s) formed during glutamine hydrolysis. Inhibited by the product CTP, via allosteric rather than competitive inhibition. Catalyzes the ATP-dependent amination of UTP to CTP with either L-glutamine or ammonia as the source of nitrogen. Regulates intracellular CTP levels through interactions with the four ribonucleotide triphosphates. The protein is CTP synthase of Ralstonia pickettii (strain 12J).